A 397-amino-acid polypeptide reads, in one-letter code: Lipid-A-disaccharide synthase (397 aa).

This sequence belongs to the LpxB family.

The catalysed reaction is a lipid X + a UDP-2-N,3-O-bis[(3R)-3-hydroxyacyl]-alpha-D-glucosamine = a lipid A disaccharide + UDP + H(+). It functions in the pathway bacterial outer membrane biogenesis; LPS lipid A biosynthesis. Its function is as follows. Condensation of UDP-2,3-diacylglucosamine and 2,3-diacylglucosamine-1-phosphate to form lipid A disaccharide, a precursor of lipid A, a phosphorylated glycolipid that anchors the lipopolysaccharide to the outer membrane of the cell. This is Lipid-A-disaccharide synthase from Mannheimia succiniciproducens (strain KCTC 0769BP / MBEL55E).